The sequence spans 271 residues: Regulatory protein RecX (271 aa).

The protein belongs to the RecX family.

It localises to the cytoplasm. Its function is as follows. Modulates RecA activity. The chain is Regulatory protein RecX from Lactobacillus delbrueckii subsp. bulgaricus (strain ATCC BAA-365 / Lb-18).